Consider the following 597-residue polypeptide: MPCIQAQYGTPATSPGPRDHLTGDPLALEFSKPTMDLASPETAPTAPATLPSFSTFMDGGYTGEFDTFLYQLPGTAQPCSSASSTSSSSSSATSPASASFKFEDFQVYGCYPGTLSGPLDETLSSSGSDYYGSPCSAPSPPTPNFQPSQLSPWDGSFGHFSPSQTYEGLRVWTEQLPKASGPPPPPTFFSFSPPTGPSPSLAQSSLKLFPAPATHQLGEGESYSVPAAFPGLAPTSPNCDTSGILDAPVTSTKARSGSSGGSEGRCAVCGDNASCQHYGVRTCEGCKGFFKRTVQKSAKYICLANKDCPVDKRRRNRCQFCRFQKCLAVGMVKEVVRTDSLKGRRGRLPSKPKQPPDASPTNLLTSLIRAHLDSGPNTAKLDYSKFQELVLPRFGKEDAGDVQQFYDLLSGSLDVIRKWAEKIPGFIELSPGDQDLLLESAFLELFILRLAYRSKPGEGKLIFCSGLVLHRLQCARGFGDWIDNILAFSRSLHSLGVDVPAFACLSALVLITDRHGLQDPRRVEELQNRIASCLKEHMAAVAGDPQPASCLSRLLGKLPELRTLCTQGLQRIFCLKLEDLVPPPPIVDKIFMDTLSF.

The segment at Met-1–Thr-22 is disordered. Positions Arg-170 to Ser-465 are required for nuclear import. A DNA-binding region (nuclear receptor) is located at residues Glu-263–Thr-338. 2 consecutive NR C4-type zinc fingers follow at residues Cys-266 to Cys-286 and Cys-302 to Cys-326. A required for binding NBRE-containing DNA region spans residues Ala-267–Lys-353. A required for the interaction with RXRA region spans residues Ala-298–Pro-360. Ser-340 is modified (phosphoserine; by PKA). A disordered region spans residues Leu-341–Pro-360. Ser-350 is subject to Phosphoserine; by PKA, RPS6KA1 and RPS6KA3. The NR LBD domain maps to Ser-359–Thr-594. A binds lipopolysaccharide region spans residues Pro-520–Gly-543. The AF-2 stretch occupies residues Pro-583–Thr-594.

It belongs to the nuclear hormone receptor family. NR4 subfamily. Binds the NGFI-B response element (NBRE) as a monomer. Binds the Nur response element (NurRE), consisting of two inverse NBRE-related octanucleotide repeats separated by 6 base-pairs, as a dimer. Interacts (via N-terminus) with NLRP3 (via LRR repeat domain); the interaction is direct, requires binding of NR4A1/Nur77 to NBRE-containing dsDNA and lipopolysaccharide, and leads to non-canonical NLRP3 inflammasome activation. Interacts with GADD45GIP1. Interacts with STK11. Interacts with IFI27. Heterodimer (via DNA-binding domain) with RXRA (via C-terminus); DNA-binding of the heterodimer is enhanced by 9-cis retinoic acid. Competes for the RXRA interaction with EP300 and thereby attenuates EP300 mediated acetylation of RXRA. Interacts with NCOA1. Interacts with NCOA2. Interacts with NCOA3. It depends on Zn(2+) as a cofactor. Post-translationally, phosphorylated at Ser-350 by RPS6KA1 and RPS6KA3 in response to mitogenic or stress stimuli. Phosphorylation of Ser-350 results in decrease in NBRE binding while phosphorylation of Ser-340 has little effect on it. Acetylated by p300/CBP, acetylation increases stability. Deacetylated by HDAC1. As to expression, expressed in lung, brain and superior cervical ganglia. High levels are seen in the adrenal tissue.

Its subcellular location is the nucleus. The protein resides in the cytoplasm. It is found in the cytosol. It localises to the mitochondrion. Its function is as follows. Orphan nuclear receptor. Binds the NGFI-B response element (NBRE) 5'-AAAGGTCA-3'. Binds 9-cis-retinoic acid outside of its ligand-binding (NR LBD) domain. Participates in energy homeostasis by sequestrating the kinase STK11 in the nucleus, thereby attenuating cytoplasmic AMPK activation. Regulates the inflammatory response in macrophages by regulating metabolic adaptations during inflammation, including repressing the transcription of genes involved in the citric acid cycle (TCA). Inhibits NF-kappa-B signaling by binding to low-affinity NF-kappa-B binding sites, such as at the IL2 promoter. May act concomitantly with NR4A2 in regulating the expression of delayed-early genes during liver regeneration. Plays a role in the vascular response to injury. In the cytosol, upon its detection of both bacterial lipopolysaccharide (LPS) and NBRE-containing mitochondrial DNA released by GSDMD pores during pyroptosis, it promotes non-canonical NLRP3 inflammasome activation by stimulating association of NLRP3 and NEK7. The protein is Nuclear receptor subfamily 4 group A member 1 (Nr4a1) of Rattus norvegicus (Rat).